We begin with the raw amino-acid sequence, 99 residues long: Aspartyl/glutamyl-tRNA(Asn/Gln) amidotransferase subunit C (99 aa).

Belongs to the GatC family. Heterotrimer of A, B and C subunits.

The catalysed reaction is L-glutamyl-tRNA(Gln) + L-glutamine + ATP + H2O = L-glutaminyl-tRNA(Gln) + L-glutamate + ADP + phosphate + H(+). The enzyme catalyses L-aspartyl-tRNA(Asn) + L-glutamine + ATP + H2O = L-asparaginyl-tRNA(Asn) + L-glutamate + ADP + phosphate + 2 H(+). In terms of biological role, allows the formation of correctly charged Asn-tRNA(Asn) or Gln-tRNA(Gln) through the transamidation of misacylated Asp-tRNA(Asn) or Glu-tRNA(Gln) in organisms which lack either or both of asparaginyl-tRNA or glutaminyl-tRNA synthetases. The reaction takes place in the presence of glutamine and ATP through an activated phospho-Asp-tRNA(Asn) or phospho-Glu-tRNA(Gln). This is Aspartyl/glutamyl-tRNA(Asn/Gln) amidotransferase subunit C from Bifidobacterium longum (strain NCC 2705).